The chain runs to 282 residues: MLDSHQPKQTQRVALVVQYLGTHFHGWQRQKQHRTVQEEIETAIAKILGHHVTLHGAGRTDSGVHAAAQVAHFDATGLIPAHKWASVINSYLPKDILIKASAAVGDRWHARFSAAYRRYRYTIYTEDRPNLFVTPFSWHYYYAPLDESLMQAALKPLMGKHHLAAFHRAGSKRSHSWVEVQAVECHRSGPFIHIEIQADGFLYGMVRLLVGMLVQVGSGQRTLANFTELWKEQRREEVKHAAPSQGLCLLRVGYPDFPFTPDVWYDTMPKLVFSQESLVNSH.

Catalysis depends on Asp-61, which acts as the Nucleophile. Tyr-119 is a substrate binding site.

The protein belongs to the tRNA pseudouridine synthase TruA family. In terms of assembly, homodimer.

The enzyme catalyses uridine(38/39/40) in tRNA = pseudouridine(38/39/40) in tRNA. Formation of pseudouridine at positions 38, 39 and 40 in the anticodon stem and loop of transfer RNAs. This chain is tRNA pseudouridine synthase A, found in Nostoc sp. (strain PCC 7120 / SAG 25.82 / UTEX 2576).